Here is a 2541-residue protein sequence, read N- to C-terminus: Talin-1 (2541 aa).

The FERM domain maps to 86–403; the sequence is RPLKIRMLDG…GYIDIILKKK (318 aa). Residues 280 to 435 are interaction with LAYN; that stretch reads FMAHKNCGNM…PKKSTVLQQQ (156 aa). The interval 482–655 is helical bundle R1; sequence RGHMPPLTSA…QTSGELLQQI (174 aa). The interval 656–786 is helical bundle R2; the sequence is GESDTDPRFQ…ALNDLLQHIK (131 aa). Positions 787 to 911 are helical bundle R3; the sequence is QHATGGQPIG…NAAAQNAIKK (125 aa). The interval 913–1043 is helical bundle R4; that stretch reads LVHKLEHAAK…RTAAQKAQEA (131 aa). Positions 1045 to 1205 are helical bundle R5; sequence GPLEIDSALG…NRCVNCLPGQ (161 aa). Residues 1206–1356 are helical bundle R6; the sequence is RDVDAAIRMV…QLITMCTQQA (151 aa). The tract at residues 1357–1452 is helical bundle R7A; the sequence is PGQKECDNAL…AYLVGVSDPN (96 aa). The tract at residues 1358–1658 is interaction with VCL and F-actin; it reads GQKECDNALR…NMRDKAPGQR (301 aa). Positions 1460 to 1579 are helical bundle R8; the sequence is LVDPTQFARA…NLTAFASNPE (120 aa). O-linked (GlcNAc) threonine glycosylation occurs at threonine 1486. The helical bundle R7B stretch occupies residues 1580 to 1652; it reads FATVPAQISP…IKKLITNMRD (73 aa). A helical bundle R9 region spans residues 1654–1821; sequence APGQRECDEA…TLNEAASAAG (168 aa). The tract at residues 1822 to 1972 is helical bundle R10; that stretch reads VVGGMVDSIT…VLAALQAGNR (151 aa). Threonine 1889 carries an O-linked (GlcNAc) threonine glycan. Positions 1973–2139 are helical bundle R11; sequence GTQACITAAS…TVKAVEDEAT (167 aa). The tract at residues 2140-2293 is helical bundle R12; sequence KGTRALEATI…QAAEAMKGTE (154 aa). The region spanning 2292-2531 is the I/LWEQ domain; that stretch reads TEWVDPEDPT…MIRQQQYKFL (240 aa). The tract at residues 2299 to 2481 is helical bundle R13; that stretch reads DPTVIAENEL…AAQKAAAFQD (183 aa).

Interacts with PIP5K1C and NRAP. Binds with high affinity to vinculin VCL and with low affinity to integrins. Interacts with APBB1IP; this inhibits VCL binding. Interacts with F-actin. Interacts with LAYN. Interacts with THSD1. In terms of processing, phosphorylated.

The protein localises to the cell projection. The protein resides in the ruffle membrane. It is found in the cytoplasm. It localises to the cytoskeleton. Its subcellular location is the cell surface. The protein localises to the cell junction. The protein resides in the focal adhesion. High molecular weight cytoskeletal protein concentrated at regions of cell-substratum contact and, in lymphocytes, at cell-cell contacts. Involved in connections of major cytoskeletal structures to the plasma membrane. In Gallus gallus (Chicken), this protein is Talin-1 (TLN1).